Here is a 255-residue protein sequence, read N- to C-terminus: Syntaxin-23 (255 aa).

The tract at residues 1–31 (MSFQDLEAGRGRSLASSRNINGGGSRQDTTQ) is disordered. Position 2 is an N-acetylserine (S2). The segment covering 14–31 (LASSRNINGGGSRQDTTQ) has biased composition (polar residues). In terms of domain architecture, t-SNARE coiled-coil homology spans 184–246 (EAVIEEREQG…AQGKSHLVRH (63 aa)).

Belongs to the syntaxin family. As to quaternary structure, part of the t-SNARE complex. Interacts with RGS1. As to expression, expressed at higher levels in leaves, flowers and stems than in roots.

The protein resides in the membrane. Functionally, may function in the docking or fusion of transport vesicles with the prevacuolar membrane. This chain is Syntaxin-23 (SYP23), found in Arabidopsis thaliana (Mouse-ear cress).